Consider the following 246-residue polypeptide: Small ribosomal subunit protein uS2 (246 aa).

It belongs to the universal ribosomal protein uS2 family.

This is Small ribosomal subunit protein uS2 from Stutzerimonas stutzeri (strain A1501) (Pseudomonas stutzeri).